The chain runs to 179 residues: Natural killer cells antigen CD94 (179 aa).

Topologically, residues 1 to 10 are cytoplasmic; sequence MAVFKTTLWR. A helical; Signal-anchor for type II membrane protein transmembrane segment spans residues 11–31; that stretch reads LISGTLGIICLSLMSTLGILL. Residues 32–179 lie on the Extracellular side of the membrane; it reads KNSFTKLSIE…NRYICKQQLI (148 aa). Cystine bridges form between Cys58–Cys70 and Cys61–Cys72. The C-type lectin domain occupies 68-175; that stretch reads YRCNCYFISS…CEDKNRYICK (108 aa). N-linked (GlcNAc...) asparagine glycans are attached at residues Asn83 and Asn132. Disulfide bonds link Cys89–Cys174 and Cys152–Cys166.

Can form disulfide-bonded heterodimer with NKG2 family members KLRC1 and KLRC2. KLRD1-KLRC1 heterodimer interacts with peptide-bound HLA-E-B2M heterotrimeric complex. KLRD1 plays a prominent role in directly interacting with HLA-E. KLRD1-KLRC1 interacts with much higher affinity with peptide-bound HLA-E-B2M than KLRD1-KLRC2. Interacts with the adapter protein TYROBP/DAP12; this interaction is required for cell surface expression and cell activation. Expressed in NK cell subsets (at protein level). Expressed in memory/effector CD8-positive alpha-beta T cell subsets (at protein level). Expressed in melanoma-specific cytotoxic T cell clones (at protein level). Expressed in terminally differentiated cytotoxic gamma-delta T cells (at protein level). KLRD1-KLRC1 and KLRD1-KLRC2 are differentially expressed in NK and T cell populations, with only minor subsets expressing both receptor complexes (at protein level).

Its subcellular location is the cell membrane. Immune receptor involved in self-nonself discrimination. In complex with KLRC1 or KLRC2 on cytotoxic and regulatory lymphocyte subsets, recognizes non-classical major histocompatibility (MHC) class Ib molecule HLA-E loaded with self-peptides derived from the signal sequence of classical MHC class Ia and non-classical MHC class Ib molecules. Enables cytotoxic cells to monitor the expression of MHC class I molecules in healthy cells and to tolerate self. Primarily functions as a ligand binding subunit as it lacks the capacity to signal. In terms of biological role, KLRD1-KLRC1 acts as an immune inhibitory receptor. Key inhibitory receptor on natural killer (NK) cells that regulates their activation and effector functions. Dominantly counteracts T cell receptor signaling on a subset of memory/effector CD8-positive T cells as part of an antigen-driven response to avoid autoimmunity. On intraepithelial CD8-positive gamma-delta regulatory T cells triggers TGFB1 secretion, which in turn limits the cytotoxic programming of intraepithelial CD8-positive alpha-beta T cells, distinguishing harmless from pathogenic antigens. In HLA-E-rich tumor microenvironment, acts as an immune inhibitory checkpoint and may contribute to progressive loss of effector functions of NK cells and tumor-specific T cells, a state known as cell exhaustion. Upon HLA-E-peptide binding, transmits intracellular signals through KLRC1 immunoreceptor tyrosine-based inhibition motifs (ITIMs) by recruiting INPP5D/SHIP-1 and INPPL1/SHIP-2 tyrosine phosphatases to ITIMs, and ultimately opposing signals transmitted by activating receptors through dephosphorylation of proximal signaling molecules. Its function is as follows. KLRD1-KLRC2 acts as an immune activating receptor. On cytotoxic lymphocyte subsets recognizes HLA-E loaded with signal sequence-derived peptides from non-classical MHC class Ib HLA-G molecules, likely playing a role in the generation and effector functions of adaptive NK cells and in maternal-fetal tolerance during pregnancy. Regulates the effector functions of terminally differentiated cytotoxic lymphocyte subsets, and in particular may play a role in adaptive NK cell response to viral infection. Upon HLA-E-peptide binding, transmits intracellular signals via the adapter protein TYROBP/DAP12, triggering the phosphorylation of proximal signaling molecules and cell activation. Functionally, (Microbial infection) Viruses like human cytomegalovirus have evolved an escape mechanism whereby virus-induced down-regulation of host MHC class I molecules is coupled to the binding of viral peptides to HLA-E, restoring HLA-E expression and inducing HLA-E-dependent NK cell immune tolerance to infected cells. Recognizes HLA-E in complex with human cytomegalovirus UL40-derived peptide (VMAPRTLIL) and inhibits NK cell cytotoxicity. (Microbial infection) May recognize HLA-E in complex with HIV-1 gag/Capsid protein p24-derived peptide (AISPRTLNA) on infected cells and may inhibit NK cell cytotoxicity, a mechanism that allows HIV-1 to escape immune recognition. In terms of biological role, (Microbial infection) Upon SARS-CoV-2 infection, may contribute to functional exhaustion of cytotoxic NK cells and CD8-positive T cells. On NK cells, may recognize HLA-E in complex with SARS-CoV-2 S/Spike protein S1-derived peptide (LQPRTFLL) expressed on the surface of lung epithelial cells, inducing NK cell exhaustion and dampening antiviral immune surveillance. The chain is Natural killer cells antigen CD94 (KLRD1) from Homo sapiens (Human).